A 640-amino-acid polypeptide reads, in one-letter code: ATP-dependent rRNA helicase spb4 (640 aa).

Residues 14–42 (WDAVTPALSEWVLEAMSSMGFTRMTPVQA) carry the Q motif motif. Residues 45–249 (IPLFMAHKDV…RVGLRNPVKV (205 aa)) form the Helicase ATP-binding domain. Position 58–65 (58–65 (AVTGSGKT)) interacts with ATP. The short motif at 197–200 (DEAD) is the DEAD box element. The Helicase C-terminal domain maps to 283-437 (ALKRILSSVQ…LITFSDADAA (155 aa)). Residues 521–629 (AYKDKQREKR…AAKAAGAKAD (109 aa)) adopt a coiled-coil conformation. Disordered regions lie at residues 531-595 (RKEL…EKQK) and 607-640 (RKKN…QGFD). Residues 568–582 (KKLKRREQKKSKHEK) are compositionally biased toward basic residues. Basic and acidic residues predominate over residues 583–595 (ARWEKMTEEEKQK). Residues 630–640 (GDDEEEFQGFD) are compositionally biased toward acidic residues.

This sequence belongs to the DEAD box helicase family. DDX55/SPB4 subfamily. In terms of assembly, component of pre-60S ribosomal complexes.

The protein localises to the nucleus. It is found in the nucleolus. It catalyses the reaction ATP + H2O = ADP + phosphate + H(+). In terms of biological role, ATP-binding RNA helicase involved in the biogenesis of 60S ribosomal subunits. Binds 90S pre-ribosomal particles and dissociates from pre-60S ribosomal particles after processing of 27SB pre-rRNA. Required for the normal formation of 18S rRNA through the processing of pre-rRNAs at sites A0, A1 and A2, and the normal formation of 25S and 5.8S rRNAs through the processing of pre-rRNAs at sites C1 and C2. The sequence is that of ATP-dependent rRNA helicase spb4 from Neosartorya fischeri (strain ATCC 1020 / DSM 3700 / CBS 544.65 / FGSC A1164 / JCM 1740 / NRRL 181 / WB 181) (Aspergillus fischerianus).